Reading from the N-terminus, the 324-residue chain is Thiazole synthase (324 aa).

The active-site Schiff-base intermediate with DXP is the Lys167. Residues Gly228, 254–255, and 276–277 each bind 1-deoxy-D-xylulose 5-phosphate; these read AG and NT.

The protein belongs to the ThiG family. Homotetramer. Forms heterodimers with either ThiH or ThiS.

Its subcellular location is the cytoplasm. The enzyme catalyses [ThiS sulfur-carrier protein]-C-terminal-Gly-aminoethanethioate + 2-iminoacetate + 1-deoxy-D-xylulose 5-phosphate = [ThiS sulfur-carrier protein]-C-terminal Gly-Gly + 2-[(2R,5Z)-2-carboxy-4-methylthiazol-5(2H)-ylidene]ethyl phosphate + 2 H2O + H(+). It functions in the pathway cofactor biosynthesis; thiamine diphosphate biosynthesis. Catalyzes the rearrangement of 1-deoxy-D-xylulose 5-phosphate (DXP) to produce the thiazole phosphate moiety of thiamine. Sulfur is provided by the thiocarboxylate moiety of the carrier protein ThiS. In vitro, sulfur can be provided by H(2)S. This is Thiazole synthase from Paramagnetospirillum magneticum (strain ATCC 700264 / AMB-1) (Magnetospirillum magneticum).